The chain runs to 823 residues: MLRLGLCAAALLCVCQPGAVRADCWLIEGDKGYVWLAICSQNQPPYETIPQHINSTVHDLRLNENKLKAVLYSSLNRFGNLTDLNLTKNEISYIEDGAFLGQTSLQVLQLGYNRLSNLTEGMLRGMSRLQFLFVQHNLIEVVTPTAFSECPSLISIDLSSNRLSRLDGATFASLASLMVCELAGNPFNCECDLFGFLAWLVVFNNVTKNYDRLQCESPREFAGYPLLVPRPYHSLNAITVLQAKCRNGSMPARPVSHPTPYSTDAQREPDENSGFNPDEILSVEPPASSTTDASAGPAIKLHQVTFTSATLVVIIPHPYSKMYVLVQYNNSYFSDVMTLKNKKEIVTLDKLRAHTEYTFCVTSLRNSRRFNHTCLTFTTRDLVPGDLAPSTSTTTHYIMTILGCLFGMVIVLGAVYYCLRKRRMQEEKQKSVNVKKTILEMRYGADVDAGSIVHAAQKLGEPPVLPVARMSSIPSMVGEKLPASKGLEAGLDTPKVATKGNYIEVRTGAAGDSLARPEEELPEIENGQGSAAEISTIAKEVDKVNQIINNCIDALKLDSASFLGGGGGGGGGGDSDLAFECQSLPAAPAASSAATPGALERPSFLSPPYKESSHHPLQRQLSADAAVSRKTCSVSSSGSIKSAKVFSLDVPDHPTPTGLAKSDSKYIEKGSPLNSPLDRLPLVPTGSSGSSGGGGGIHHLEVKPAYHCSEHRHSFPALYYEEGADSLSQRVSFLKPLTRSKRDSTYSQLSPRHYYSGYSSSPEYSSESTHKIWERFRPYKKHHREEVYMAAGHALRKKVQFAKDEDLHDILDYWKGVSAQQKL.

Positions 1-22 (MLRLGLCAAALLCVCQPGAVRA) are cleaved as a signal peptide. At 23–397 (DCWLIEGDKG…APSTSTTTHY (375 aa)) the chain is on the extracellular side. The N-linked (GlcNAc...) asparagine glycan is linked to N54. 5 LRR repeats span residues 56–77 (TVHD…SLNR), 80–101 (NLTD…AFLG), 104–125 (SLQV…MLRG), 128–149 (RLQF…AFSE), and 152–173 (SLIS…TFAS). N-linked (GlcNAc...) asparagine glycans are attached at residues N80, N85, and N117. The LRRCT domain occupies 185 to 247 (NPFNCECDLF…ITVLQAKCRN (63 aa)). 2 N-linked (GlcNAc...) asparagine glycosylation sites follow: N205 and N247. The tract at residues 249 to 294 (SMPARPVSHPTPYSTDAQREPDENSGFNPDEILSVEPPASSTTDAS) is disordered. The Fibronectin type-III domain occupies 292–379 (DASAGPAIKL…FNHTCLTFTT (88 aa)). The chain crosses the membrane as a helical span at residues 398–418 (IMTILGCLFGMVIVLGAVYYC). Topologically, residues 419–823 (LRKRRMQEEK…WKGVSAQQKL (405 aa)) are cytoplasmic. The disordered stretch occupies residues 590 to 624 (ASSAATPGALERPSFLSPPYKESSHHPLQRQLSAD). 3 positions are modified to phosphoserine: S622, S671, and S675.

Interacts with PPP1CA.

It localises to the membrane. Its function is as follows. Inhibits phosphatase activity of protein phosphatase 1 (PP1) complexes. This is Protein phosphatase 1 regulatory subunit 29 (Elfn2) from Mus musculus (Mouse).